We begin with the raw amino-acid sequence, 97 residues long: HssA/B-like protein 27 (97 aa).

The protein belongs to the hssA/B family.

In Dictyostelium discoideum (Social amoeba), this protein is HssA/B-like protein 27 (hssl27).